A 176-amino-acid polypeptide reads, in one-letter code: Nutrient stress-induced DNA-binding protein (176 aa).

Belongs to the Dps family. In terms of assembly, hexamer.

Involved in protection of chromosomal DNA from damage under nutrient-limited and oxidative stress conditions. Binds heme. The chain is Nutrient stress-induced DNA-binding protein (dpsA) from Synechococcus sp. (strain ATCC 27144 / PCC 6301 / SAUG 1402/1) (Anacystis nidulans).